Reading from the N-terminus, the 557-residue chain is Dihydroxy-acid dehydratase (557 aa).

C50 contacts [2Fe-2S] cluster. D82 contributes to the Mg(2+) binding site. C123 contacts [2Fe-2S] cluster. 2 residues coordinate Mg(2+): D124 and K125. K125 is modified (N6-carboxylysine). C195 is a binding site for [2Fe-2S] cluster. E447 contributes to the Mg(2+) binding site. The Proton acceptor role is filled by S473.

This sequence belongs to the IlvD/Edd family. In terms of assembly, homodimer. [2Fe-2S] cluster is required as a cofactor. Requires Mg(2+) as cofactor.

The enzyme catalyses (2R)-2,3-dihydroxy-3-methylbutanoate = 3-methyl-2-oxobutanoate + H2O. It carries out the reaction (2R,3R)-2,3-dihydroxy-3-methylpentanoate = (S)-3-methyl-2-oxopentanoate + H2O. It functions in the pathway amino-acid biosynthesis; L-isoleucine biosynthesis; L-isoleucine from 2-oxobutanoate: step 3/4. Its pathway is amino-acid biosynthesis; L-valine biosynthesis; L-valine from pyruvate: step 3/4. In terms of biological role, functions in the biosynthesis of branched-chain amino acids. Catalyzes the dehydration of (2R,3R)-2,3-dihydroxy-3-methylpentanoate (2,3-dihydroxy-3-methylvalerate) into 2-oxo-3-methylpentanoate (2-oxo-3-methylvalerate) and of (2R)-2,3-dihydroxy-3-methylbutanoate (2,3-dihydroxyisovalerate) into 2-oxo-3-methylbutanoate (2-oxoisovalerate), the penultimate precursor to L-isoleucine and L-valine, respectively. This chain is Dihydroxy-acid dehydratase, found in Burkholderia mallei (strain NCTC 10247).